The primary structure comprises 178 residues: Adenine phosphoribosyltransferase (178 aa).

This sequence belongs to the purine/pyrimidine phosphoribosyltransferase family. In terms of assembly, homodimer.

The protein resides in the cytoplasm. It catalyses the reaction AMP + diphosphate = 5-phospho-alpha-D-ribose 1-diphosphate + adenine. The protein operates within purine metabolism; AMP biosynthesis via salvage pathway; AMP from adenine: step 1/1. Its function is as follows. Catalyzes a salvage reaction resulting in the formation of AMP, that is energically less costly than de novo synthesis. In Bacteroides fragilis (strain ATCC 25285 / DSM 2151 / CCUG 4856 / JCM 11019 / LMG 10263 / NCTC 9343 / Onslow / VPI 2553 / EN-2), this protein is Adenine phosphoribosyltransferase.